The primary structure comprises 326 residues: Vitamin B12 import system permease protein BtuC (326 aa).

9 consecutive transmembrane segments (helical) span residues 17–39 (LSLS…QWIA), 59–81 (RTLA…QALF), 88–107 (PGLL…AVLL), 111–133 (QLAG…LILL), 146–168 (LLAG…YFST), 188–205 (WQQS…IWIC), 242–264 (MVGV…PHIL), 274–296 (VLLP…VARL), and 303–322 (LPIG…WLLL).

It belongs to the binding-protein-dependent transport system permease family. FecCD subfamily. The complex is composed of two ATP-binding proteins (BtuD), two transmembrane proteins (BtuC) and a solute-binding protein (BtuF).

It localises to the cell inner membrane. Part of the ABC transporter complex BtuCDF involved in vitamin B12 import. Involved in the translocation of the substrate across the membrane. The polypeptide is Vitamin B12 import system permease protein BtuC (Salmonella paratyphi A (strain ATCC 9150 / SARB42)).